The following is a 395-amino-acid chain: Putative nickel insertion protein (395 aa).

The protein belongs to the LarC family.

The sequence is that of Putative nickel insertion protein from Archaeoglobus fulgidus (strain ATCC 49558 / DSM 4304 / JCM 9628 / NBRC 100126 / VC-16).